A 343-amino-acid chain; its full sequence is Transmembrane protein 120A (343 aa).

Residues 1-135 (MQSPPPDPLG…KFAYKDEYEK (135 aa)) lie on the Cytoplasmic side of the membrane. Residue Lys130 participates in CoA binding. The helical transmembrane segment at 136-156 (FKLYLTIILIVISFTCRFLLN) threads the bilayer. The Extracellular segment spans residues 157-162 (SRVTDA). The chain crosses the membrane as a helical span at residues 163-183 (AFNFLLVWYYCTLTIRESILI). Residues 184-190 (NNGSRIK) are Cytoplasmic-facing. Ser187 and Arg188 together coordinate CoA. A helical membrane pass occupies residues 191 to 211 (GWWVFHHYVSTFLSGVMLTWP). Residues 212-222 (DGLMYQKFRNQ) are Extracellular-facing. The chain crosses the membrane as a helical span at residues 223–240 (FLSFSMYQSFVQFLQYYY). Residues Gln237, Tyr240, Gln241, and His283 each coordinate CoA. Topologically, residues 241 to 273 (QSGCLYRLRALGERHTMDLTVEGFQSWMWRGLT) are cytoplasmic. A helical transmembrane segment spans residues 274-294 (FLLPFLFFGHFWQLFNALTLF). The Extracellular portion of the chain corresponds to 295 to 305 (NLARDPECKEW). The chain crosses the membrane as a helical span at residues 306 to 326 (QVLMCGFPFLLLFLGNFFTTL). Over 327–343 (RVVHQKFHSQQHGNKKD) the chain is Cytoplasmic. A CoA-binding site is contributed by Lys332.

Belongs to the TMEM120 family. In terms of assembly, homodimer. Forms heterooligomer with TMEM120B. Interacts with PKD2; TMEM120A inhibits PKD2 channel activity through the physical association of PKD2 with TMEM120A. In terms of tissue distribution, widely expressed, with higher expression in the heart, kidneys, colon and sensory neurons of the dorsal root ganglia. Expressed in nociceptors. Highly expressed in white adipose tissue (at protein level). Highly expressed in brown adipose tissue and expressed at low levels in liver.

The protein resides in the cell membrane. The protein localises to the nucleus envelope. It is found in the nucleus inner membrane. Its subcellular location is the endoplasmic reticulum. In terms of biological role, multifunctional protein involved in mechanosensation, and plays an essential role in lipid metabolism and adipocyte differentiation. May function as a potential ion channel involved in sensing mechanical stimuli. Mediates the mechanosensitivity of the PKD2-TMEM120A channel complex through direct physical interaction. TMEM120A seems to affect mechanosensation by inhibiting PIEZO2 channels, possibly by altering cellular lipid content. TMEM120A is structurally similar to a lipid-modifying enzyme, ELOVL7, and contains a bound coenzyme A molecule, which suggests it might function as an enzyme in lipid metabolism. This is Transmembrane protein 120A from Mus musculus (Mouse).